Here is a 493-residue protein sequence, read N- to C-terminus: Galactose-1-phosphate uridylyltransferase 2 (493 aa).

This sequence belongs to the galactose-1-phosphate uridylyltransferase type 2 family.

Its subcellular location is the cytoplasm. It carries out the reaction alpha-D-galactose 1-phosphate + UDP-alpha-D-glucose = alpha-D-glucose 1-phosphate + UDP-alpha-D-galactose. Its pathway is carbohydrate metabolism; galactose metabolism. In Streptococcus pneumoniae serotype 4 (strain ATCC BAA-334 / TIGR4), this protein is Galactose-1-phosphate uridylyltransferase 2 (galT2).